The following is a 126-amino-acid chain: Protein ApaG (126 aa).

Residues 2-126 (TELETSIKID…FRLSIPGLLH (125 aa)) enclose the ApaG domain.

The protein is Protein ApaG of Shewanella woodyi (strain ATCC 51908 / MS32).